The sequence spans 278 residues: tRNA (guanine-N(7)-)-methyltransferase (278 aa).

S-adenosyl-L-methionine contacts are provided by residues glycine 63, 86 to 87 (EL), 119 to 120 (NA), and leucine 139. The active site involves aspartate 142. An S-adenosyl-L-methionine-binding site is contributed by 217–219 (TEE). A disordered region spans residues 259 to 278 (IDSTTTTTTSTATITEVESK). Over residues 261-278 (STTTTTTSTATITEVESK) the composition is skewed to low complexity.

The protein belongs to the class I-like SAM-binding methyltransferase superfamily. TrmB family.

Its subcellular location is the nucleus. It carries out the reaction guanosine(46) in tRNA + S-adenosyl-L-methionine = N(7)-methylguanosine(46) in tRNA + S-adenosyl-L-homocysteine. It functions in the pathway tRNA modification; N(7)-methylguanine-tRNA biosynthesis. In terms of biological role, catalyzes the formation of N(7)-methylguanine at position 46 (m7G46) in tRNA. In Dictyostelium discoideum (Social amoeba), this protein is tRNA (guanine-N(7)-)-methyltransferase (mettl1).